We begin with the raw amino-acid sequence, 98 residues long: NADH-ubiquinone oxidoreductase chain 4L (98 aa).

3 helical membrane-spanning segments follow: residues 1 to 21 (MSMV…GLLM), 29 to 49 (SLLC…LTIL), and 61 to 81 (IILL…LVMV).

The protein belongs to the complex I subunit 4L family. In terms of assembly, core subunit of respiratory chain NADH dehydrogenase (Complex I) which is composed of 45 different subunits.

The protein localises to the mitochondrion inner membrane. The catalysed reaction is a ubiquinone + NADH + 5 H(+)(in) = a ubiquinol + NAD(+) + 4 H(+)(out). In terms of biological role, core subunit of the mitochondrial membrane respiratory chain NADH dehydrogenase (Complex I) which catalyzes electron transfer from NADH through the respiratory chain, using ubiquinone as an electron acceptor. Part of the enzyme membrane arm which is embedded in the lipid bilayer and involved in proton translocation. The polypeptide is NADH-ubiquinone oxidoreductase chain 4L (MT-ND4L) (Bos indicus (Zebu)).